Here is a 538-residue protein sequence, read N- to C-terminus: Protein PNS1 (538 aa).

Low complexity predominate over residues 1–54 (MGESDAYYNGGQQQQYNGGYQQQYQPQPPAASYQAPPQQPYQQQPYQQGPPQNG). A disordered region spans residues 1 to 67 (MGESDAYYNG…GNGYMPAQGY (67 aa)). Residues 1-88 (MGESDAYYNG…FKIAKPKYND (88 aa)) are Cytoplasmic-facing. Residues 89-109 (LWAGILLILVFAGFVVVSGLA) form a helical membrane-spanning segment. The Extracellular portion of the chain corresponds to 110-137 (LQGYSANKGNAGDGIYNNKNDFSPNTST). Residue N134 is glycosylated (N-linked (GlcNAc...) asparagine). The chain crosses the membrane as a helical span at residues 138-158 (VILFMFVLAVAFVLSYAYVWM). At 159–165 (ARLFPKQ) the chain is on the cytoplasmic side. Residues 166 to 186 (FIWVTGILNVCWAIGTAIFYL) traverse the membrane as a helical segment. Over 187–191 (WRKYW) the chain is Extracellular. A helical transmembrane segment spans residues 192–212 (SAGIVFLIFGLFMAFCFWTWI). Topologically, residues 213–239 (SRIPFSALMLKTTIDVSKKYGHVYLVS) are cytoplasmic. Residues 240 to 260 (LIGGIIATAFSAWYAITLVGI) form a helical membrane-spanning segment. Residues 261–280 (YVKYQPAQDNPSCADGGCGK) are Extracellular-facing. Residues 281–301 (GKVIGLIAFITFAMYWFSEWL) form a helical membrane-spanning segment. At 302-335 (KNTIHTTIAGVYGSWYFNPHNFPKDATRASAKRA) the chain is on the cytoplasmic side. The helical transmembrane segment at 336–356 (LTYSFGSIALGSLLVAIIQFL) threads the bilayer. The Extracellular portion of the chain corresponds to 357 to 372 (RQICNAARNQEGADGS). The helical transmembrane segment at 373–393 (FVGYAIFCCISCLLGLLEWAV) threads the bilayer. At 394-434 (EFINRYAFCHIALYGKAYFAAAKDTWKMIKDRGIDALINDC) the chain is on the cytoplasmic side. The helical transmembrane segment at 435–455 (LIGPVLSFGALFIAYACALLA) threads the bilayer. At 456-474 (YLYLYFTDPAYNSDGQYTA) the chain is on the extracellular side. A helical membrane pass occupies residues 475-495 (VVMAFSFLIGFQIANVFTTPI). Topologically, residues 496–538 (SSGIETIFVAAGWDPQVMWRDHPELYNEMVRVYPKVQQVIKDR) are cytoplasmic.

It belongs to the CTL (choline transporter-like) family.

Its subcellular location is the cell membrane. Probably involved in transport through the plasma membrane. This chain is Protein PNS1 (PNS1), found in Gibberella zeae (strain ATCC MYA-4620 / CBS 123657 / FGSC 9075 / NRRL 31084 / PH-1) (Wheat head blight fungus).